We begin with the raw amino-acid sequence, 498 residues long: MLEEGVLPSPGPALPQEENTGEEGMAAGLLTAGPRGSTFFSSVTVAFAQERWRCLVSTPRDRFKEGIPGKSRSLVLLGLPVSQPGMNSQLEQREGAWMLEGEDLRSPSPGWKIISGSPPEQALSEASFQDPCVEMPPGDSDHGTSDLEKSFNLRPVLSPQQRVPVEARPRKCETHTESFKNSEILKPHRAKPYACNECGKAFSYCSSLSQHQKSHTGEKPYECSECGKAFSQSSSLIQHQRIHTGEKPYKCSECGRAFSQNANLTKHQRTHTGEKPYRCSECEKAFSDCSALVQHQRIHTGEKPYECSDCGKAFRHSANLTNHQRTHTGEKPYKCSECGKAFSYCAAFIQHQRIHTGEKPYRCAACGKAFSQSANLTNHQRTHTGEKPYKCSECGKAFSQSTNLIIHQKTHTGEKPYKCNECGKFFSESSALIRHHIIHTGEKPYECNECGKAFNQSSSLSQHQRIHTGVKPYECSECGKAFRCSSAFVRHQRLHAGE.

Residues 1–23 are disordered; it reads MLEEGVLPSPGPALPQEENTGEE. In terms of domain architecture, KRAB spans 38–109; the sequence is TFFSSVTVAF…EGEDLRSPSP (72 aa). 11 consecutive C2H2-type zinc fingers follow at residues 193–215, 221–243, 249–271, 277–299, 305–327, 333–355, 361–383, 389–411, 417–439, 445–467, and 473–495; these read YACN…QKSH, YECS…QRIH, YKCS…QRTH, YRCS…QRIH, YECS…QRTH, YKCS…QRIH, YRCA…QRTH, YKCS…QKTH, YKCN…HIIH, YECN…QRIH, and YECS…QRLH.

The protein belongs to the krueppel C2H2-type zinc-finger protein family.

Its subcellular location is the nucleus. Its function is as follows. May be involved in transcriptional regulation. This Homo sapiens (Human) protein is Zinc finger protein 79 (ZNF79).